The primary structure comprises 134 residues: uncharacterized protein (134 aa).

The interval 59-92 (VSKPKRRSPHPHGNKAADKRKTTEKEPERKKRVG) is disordered. Basic residues predominate over residues 61–71 (KPKRRSPHPHG). The segment covering 73–87 (KAADKRKTTEKEPER) has biased composition (basic and acidic residues).

This is an uncharacterized protein from Saccharomyces cerevisiae (strain ATCC 204508 / S288c) (Baker's yeast).